The chain runs to 1350 residues: Tectonin beta-propeller repeat-containing protein (1350 aa).

TECPR repeat units follow at residues 23-59 (GAWR…VHVH), 233-271 (LRWT…VRTG), 280-320 (DSWL…FRRG), and 336-371 (KGWV…HRSG). A compositionally biased stretch (low complexity) spans 396–415 (SSLSIVSRKSGGSSSTPGSK). Disordered stretches follow at residues 396–420 (SSLS…QSFS) and 671–691 (SGSG…SGTF). Residues 816 to 955 (YYNTLYNGMP…RIKLFNVLYR (140 aa)) enclose the Galectin domain. TECPR repeat units lie at residues 966 to 1000 (MHWR…VYNG), 1187 to 1223 (DAWE…FRYG), 1232 to 1269 (DAWQ…VRKE), and 1278 to 1322 (SHWQ…RRCG).

This sequence belongs to the TECPR1 family.

In terms of biological role, involved in peroxisome biogenesis. The chain is Tectonin beta-propeller repeat-containing protein (Pex23) from Drosophila melanogaster (Fruit fly).